The chain runs to 281 residues: Pantothenate synthetase (281 aa).

Residue 29–36 (MGYLHEGH) coordinates ATP. The active-site Proton donor is His36. Gln60 contacts (R)-pantoate. Gln60 provides a ligand contact to beta-alanine. 146–149 (GQKD) provides a ligand contact to ATP. Residue Gln152 participates in (R)-pantoate binding. ATP-binding positions include Val175 and 183 to 186 (MSSR).

The protein belongs to the pantothenate synthetase family. In terms of assembly, homodimer.

Its subcellular location is the cytoplasm. The enzyme catalyses (R)-pantoate + beta-alanine + ATP = (R)-pantothenate + AMP + diphosphate + H(+). The protein operates within cofactor biosynthesis; (R)-pantothenate biosynthesis; (R)-pantothenate from (R)-pantoate and beta-alanine: step 1/1. Functionally, catalyzes the condensation of pantoate with beta-alanine in an ATP-dependent reaction via a pantoyl-adenylate intermediate. The protein is Pantothenate synthetase of Pseudothermotoga lettingae (strain ATCC BAA-301 / DSM 14385 / NBRC 107922 / TMO) (Thermotoga lettingae).